A 78-amino-acid polypeptide reads, in one-letter code: Vacuolar ATPase assembly integral membrane protein VMA21 (78 aa).

Over 1 to 14 (MPADIPKSVVQKLV) the chain is Cytoplasmic. Residues 15 to 35 (FFTAAMIICPVATFFICQYLF) traverse the membrane as a helical segment. Residues 36 to 38 (SNN) are Lumenal-facing. Residues 39 to 59 (AIISGGVSALVANIVLIGYVV) traverse the membrane as a helical segment. The Cytoplasmic portion of the chain corresponds to 60–78 (AAFMEDTTEQEPEETKKSR). Residues 75-78 (KKSR) carry the Prevents secretion from ER motif.

The protein belongs to the VMA21 family.

Its subcellular location is the endoplasmic reticulum membrane. The protein resides in the endoplasmic reticulum-Golgi intermediate compartment membrane. It is found in the cytoplasmic vesicle. The protein localises to the COPII-coated vesicle membrane. Its function is as follows. Required for the assembly of the V0 complex of the vacuolar ATPase (V-ATPase) in the endoplasmic reticulum. This chain is Vacuolar ATPase assembly integral membrane protein VMA21, found in Debaryomyces hansenii (strain ATCC 36239 / CBS 767 / BCRC 21394 / JCM 1990 / NBRC 0083 / IGC 2968) (Yeast).